A 636-amino-acid polypeptide reads, in one-letter code: Threonine--tRNA ligase (636 aa).

The TGS domain occupies 1-63; the sequence is MNEINVTLPD…ADGARVEIVT (63 aa). The catalytic stretch occupies residues 243–534; that stretch reads DHRKLGRELD…LIEHFAGNFP (292 aa). Zn(2+) is bound by residues C335, H386, and H511.

It belongs to the class-II aminoacyl-tRNA synthetase family. Homodimer. It depends on Zn(2+) as a cofactor.

Its subcellular location is the cytoplasm. It catalyses the reaction tRNA(Thr) + L-threonine + ATP = L-threonyl-tRNA(Thr) + AMP + diphosphate + H(+). Its function is as follows. Catalyzes the attachment of threonine to tRNA(Thr) in a two-step reaction: L-threonine is first activated by ATP to form Thr-AMP and then transferred to the acceptor end of tRNA(Thr). Also edits incorrectly charged L-seryl-tRNA(Thr). This is Threonine--tRNA ligase from Geobacter sp. (strain M21).